A 272-amino-acid polypeptide reads, in one-letter code: NADH-dependent L-xylulose reductase (272 aa).

Residues Leu24 and Asp78 each coordinate NADP(+). Catalysis depends on Ser160, which acts as the Proton donor. NADP(+)-binding residues include Tyr175, Lys179, and Ile208. The active-site Proton acceptor is the Tyr175. Lys179 acts as the Lowers pKa of active site Tyr in catalysis.

It belongs to the short-chain dehydrogenases/reductases (SDR) family.

It catalyses the reaction xylitol + NAD(+) = L-xylulose + NADH + H(+). The catalysed reaction is D-arabinitol + NAD(+) = D-ribulose + NADH + H(+). Functionally, NADH-dependent L-xylulose reductase; part of the yeast pathway for L-arabinose catabolism. Reversibly converts L-xylulose to xylitol and D-ribulose to D-arabinitol. It has a much lower activity with D-xylulose. Sugar alcohols can serve as a substrate when the hydroxyl group of C-2 is in the L- and the hydroxyl group of the C-3 is in the D-configuration. Also seems to be specific for sugar alcohols that have not more than 5 carbons since no activity is observed with dulcitol (galactitol), which has the hydroxyl group of C-2 in L- and of C-3 in D-configuration, but is a six-carbon sugar alcohol. The chain is NADH-dependent L-xylulose reductase from Ambrosiozyma monospora (Yeast).